Here is a 39-residue protein sequence, read N- to C-terminus: Antimicrobial peptide CHP1 (39 aa).

Intrachain disulfides connect Cys-6–Cys-28, Cys-13–Cys-34, and Cys-18–Cys-35.

Functionally, bactericidal activity; inhibits S.aureus and E.coli. The protein is Antimicrobial peptide CHP1 of Gallus gallus (Chicken).